A 193-amino-acid polypeptide reads, in one-letter code: Cerebellin-1 (193 aa).

A signal peptide spans Met-1 to Gly-21. An N-linked (GlcNAc...) asparagine glycan is attached at Asn-23. Positions Cys-34–Cys-38 are essential for interaction with NRXN1 and linker of two C1q trimers into disulfide-linked hexamers. The 137-residue stretch at Ser-57–Leu-193 folds into the C1q domain. The tract at residues Val-62–Leu-193 is necessary for interaction with CBLN3, and homotrimerization. Asn-79 carries N-linked (GlcNAc...) asparagine glycosylation. Residues Tyr-122–Asp-147 are essential for interaction with GRID2.

Homohexamer; disulfide-linked homotrimers. The trimers are assembled via the globular C1q domains. The trimers associate via N-terminal cysteine residues to form disulfide-linked hexamers. May form oligomers with CBLN2, CBLN3 and CBLN4 prior to secretion. Once secreted, does not interact with other CBLN family members. Interacts with GRID1. Interacts with NRXN1 and NRXN2 long (alpha) and short (beta) isoforms produced by alternative promoter usage. Competes with NLGN1 for NRXN1-binding. Weakly interacts with NRXN3 short isoform and not at all with NRXN3 long isoform. Interacts (via C1q domain) with GRID2; GRID2-binding is calcium-independent; CBLN1 hexamers anchor GRID2 N-terminal domain dimers to monomeric NRXN1 isoform beta; promotes synaptogenesis and mediates the D-Serine-dependent long term depression signals and AMPA receptor endocytosis. Post-translationally, the proteolytic processing to yield cerebellin seems to occur either prior to the secretion by presynaptic neurons and subsequent oligomerization or in some other location after release of the mature protein. In terms of processing, sialoglycoprotein.

It is found in the secreted. The protein resides in the postsynaptic cell membrane. Required for synapse integrity and synaptic plasticity. During cerebellar synapse formation, essential for the matching and maintenance of pre- and post-synaptic elements at parallel fiber-Purkinje cell synapses, the establishment of the proper pattern of climbing fiber-Purkinje cell innervation, and induction of long-term depression at parallel fiber-Purkinje cell synapses. Plays a role as a synaptic organizer that acts bidirectionally on both pre- and post-synaptic components. On the one hand induces accumulation of synaptic vesicles in the pre-synaptic part by binding with NRXN1 and in other hand induces clustering of GRID2 and its associated proteins at the post-synaptic site through association of GRID2. NRXN1-CBLN1-GRID2 complex directly induces parallel fiber protrusions that encapsulate spines of Purkinje cells leading to accumulation of GRID2 and synaptic vesicles. Required for CBLN3 export from the endoplasmic reticulum and secretion. NRXN1-CBLN1-GRID2 complex mediates the D-Serine-dependent long term depression signals and AMPA receptor endocytosis. Essential for long-term maintenance but not establishment of excitatory synapses. Inhibits the formation and function of inhibitory GABAergic synapses in cerebellar Purkinje cells. Its function is as follows. The cerebellin peptide exerts neuromodulatory functions. Directly stimulates norepinephrine release via the adenylate cyclase/PKA-dependent signaling pathway; and indirectly enhances adrenocortical secretion in vivo, through a paracrine mechanism involving medullary catecholamine release. This chain is Cerebellin-1, found in Bos taurus (Bovine).